The sequence spans 746 residues: Protein O-mannosyl-transferase 1 (746 aa).

The next 7 membrane-spanning stretches (helical) occupy residues 30 to 50 (PLVVTVDINLNLVALTGLGLL), 90 to 110 (FGHMLLALGGWLGGFDGNFLW), 121 to 141 (VPIWSLRLLPALAGALSVPMA), 144 to 164 (IVLELHFSHGAAIGAALLMLI), 176 to 196 (LLESILIFFNLLAVLSYLKFF), 228 to 248 (MGIFTYLLVLGIAAVHAWNLI), and 266 to 286 (IVALLVVPVFLYLLFFYVHLM). 3 consecutive MIR domains span residues 318–381 (PLEV…VKDP), 392–449 (PRPV…LDIV), and 453–513 (SNRD…VEEH). Asn435, Asn471, and Asn539 each carry an N-linked (GlcNAc...) asparagine glycan. Helical transmembrane passes span 597–617 (IVIWTSASLATVVYTLLFFWY), 636–656 (WVLAGALCTGGWALNYLPFFL), and 660–680 (VLFLYHYLPALTFQILLLPIV).

The protein belongs to the glycosyltransferase 39 family.

It is found in the endoplasmic reticulum membrane. It catalyses the reaction a di-trans,poly-cis-dolichyl beta-D-mannosyl phosphate + L-seryl-[protein] = 3-O-(alpha-D-mannosyl)-L-seryl-[protein] + a di-trans,poly-cis-dolichyl phosphate + H(+). The enzyme catalyses a di-trans,poly-cis-dolichyl beta-D-mannosyl phosphate + L-threonyl-[protein] = 3-O-(alpha-D-mannosyl)-L-threonyl-[protein] + a di-trans,poly-cis-dolichyl phosphate + H(+). Its pathway is protein modification; protein glycosylation. Functionally, transfers mannosyl residues to the hydroxyl group of serine or threonine residues. Coexpression of both POMT1 and POMT2 is necessary for enzyme activity, expression of either POMT1 or POMT2 alone is insufficient. Essentially dedicated to O-mannosylation of alpha-DAG1 and few other proteins but not of cadherins and protocaherins. The sequence is that of Protein O-mannosyl-transferase 1 (Pomt1) from Mus musculus (Mouse).